We begin with the raw amino-acid sequence, 181 residues long: Adenine phosphoribosyltransferase (181 aa).

This sequence belongs to the purine/pyrimidine phosphoribosyltransferase family. Homodimer.

The protein localises to the cytoplasm. It carries out the reaction AMP + diphosphate = 5-phospho-alpha-D-ribose 1-diphosphate + adenine. Its pathway is purine metabolism; AMP biosynthesis via salvage pathway; AMP from adenine: step 1/1. In terms of biological role, catalyzes a salvage reaction resulting in the formation of AMP, that is energically less costly than de novo synthesis. In Rhodopseudomonas palustris (strain BisB5), this protein is Adenine phosphoribosyltransferase.